Reading from the N-terminus, the 328-residue chain is NADH-cytochrome b5 reductase-like protein (328 aa).

The FAD-binding FR-type domain maps to 76–184 (DKWLEFKLQD…KGPVEKFKYS (109 aa)). Thr-201 is subject to Phosphothreonine.

This sequence belongs to the flavoprotein pyridine nucleotide cytochrome reductase family. It depends on FAD as a cofactor.

The protein localises to the mitochondrion. It carries out the reaction 2 Fe(III)-[cytochrome b5] + NADH = 2 Fe(II)-[cytochrome b5] + NAD(+) + H(+). In terms of biological role, desaturation and elongation of fatty acids. This chain is NADH-cytochrome b5 reductase-like protein (CBR2), found in Arabidopsis thaliana (Mouse-ear cress).